The following is a 236-amino-acid chain: 7-cyano-7-deazaguanine synthase 2 (236 aa).

11 to 21 is an ATP binding site; the sequence is FSGGQDSATCL. Residues C199, C214, C217, and C220 each coordinate Zn(2+).

The protein belongs to the QueC family. Zn(2+) serves as cofactor.

The catalysed reaction is 7-carboxy-7-deazaguanine + NH4(+) + ATP = 7-cyano-7-deazaguanine + ADP + phosphate + H2O + H(+). It participates in purine metabolism; 7-cyano-7-deazaguanine biosynthesis. In terms of biological role, catalyzes the ATP-dependent conversion of 7-carboxy-7-deazaguanine (CDG) to 7-cyano-7-deazaguanine (preQ(0)). The chain is 7-cyano-7-deazaguanine synthase 2 from Sphingopyxis alaskensis (strain DSM 13593 / LMG 18877 / RB2256) (Sphingomonas alaskensis).